Here is a 365-residue protein sequence, read N- to C-terminus: Cobalt-precorrin-5B C(1)-methyltransferase (365 aa).

This sequence belongs to the CbiD family.

It carries out the reaction Co-precorrin-5B + S-adenosyl-L-methionine = Co-precorrin-6A + S-adenosyl-L-homocysteine. It participates in cofactor biosynthesis; adenosylcobalamin biosynthesis; cob(II)yrinate a,c-diamide from sirohydrochlorin (anaerobic route): step 6/10. Functionally, catalyzes the methylation of C-1 in cobalt-precorrin-5B to form cobalt-precorrin-6A. The polypeptide is Cobalt-precorrin-5B C(1)-methyltransferase (Clostridium perfringens (strain ATCC 13124 / DSM 756 / JCM 1290 / NCIMB 6125 / NCTC 8237 / Type A)).